Here is a 189-residue protein sequence, read N- to C-terminus: Translation machinery-associated protein 22 (189 aa).

The SUI1 domain maps to 94–165; it reads VTIKRIERNK…EAKDYIEKLL (72 aa).

Belongs to the DENR family. As to quaternary structure, interacts with the 40S ribosomal subunit.

The protein localises to the cytoplasm. The chain is Translation machinery-associated protein 22 (TMA22) from Debaryomyces hansenii (strain ATCC 36239 / CBS 767 / BCRC 21394 / JCM 1990 / NBRC 0083 / IGC 2968) (Yeast).